The sequence spans 292 residues: 2-(5''-triphosphoribosyl)-3'-dephosphocoenzyme-A synthase (292 aa).

The protein belongs to the CitG/MdcB family.

The enzyme catalyses 3'-dephospho-CoA + ATP = 2'-(5''-triphospho-alpha-D-ribosyl)-3'-dephospho-CoA + adenine. In terms of biological role, catalyzes the formation of 2-(5''-triphosphoribosyl)-3'-dephosphocoenzyme-A, the precursor of the prosthetic group of the holo-acyl carrier protein (gamma chain) of citrate lyase, from ATP and dephospho-CoA. The protein is 2-(5''-triphosphoribosyl)-3'-dephosphocoenzyme-A synthase of Escherichia coli (strain ATCC 8739 / DSM 1576 / NBRC 3972 / NCIMB 8545 / WDCM 00012 / Crooks).